A 160-amino-acid chain; its full sequence is Anaerobic nitrite reductase MHB1 (160 aa).

A Globin domain is found at 8–157 (GFTEEQEALV…LVNAIKSEMK (150 aa)). The Homodimerization signature appears at 41 to 45 (EIAPS). Heme b contacts are provided by Ser51, Lys65, His69, Lys99, and His104. Positions 111 to 123 (DEHFEVTKFALLE) match the Homodimerization motif.

The protein belongs to the plant globin family. In terms of assembly, homodimer. Heme b serves as cofactor. Root specific.

Its subcellular location is the nucleus matrix. It localises to the cytoplasm. The catalysed reaction is Fe(III)-heme b-[protein] + nitric oxide + H2O = Fe(II)-heme b-[protein] + nitrite + 2 H(+). Its function is as follows. Phytoglobin that reduces nitrite to nitric oxide (NO) under anoxic conditions (e.g. during flooding or in waterlogged soil) and upon root nodulation. Required for general plant development and during nodulation, especially for the onset of symbiosis. Monitors nitric oxide (NO) levels during early phase of the nitrogen-fixing symbiosis and buffers oxygen in functioning nodules. May not function as an oxygen storage or transport protein. Has an unusually high affinity for O(2) through a hexacoordinate heme iron because of a very low dissociation constant. The protein is Anaerobic nitrite reductase MHB1 of Medicago sativa (Alfalfa).